A 319-amino-acid chain; its full sequence is Tyrosine--tRNA ligase (319 aa).

Tyr35 lines the L-tyrosine pocket. Positions 40 to 48 match the 'HIGH' region motif; the sequence is PSGKIHLGH. Residues Tyr156, Gln160, Asp163, and Gln178 each coordinate L-tyrosine. The 'KMSKS' region signature appears at 213–217; the sequence is KMSSS. Ser216 contacts ATP.

It belongs to the class-I aminoacyl-tRNA synthetase family. TyrS type 3 subfamily. Homodimer.

Its subcellular location is the cytoplasm. It carries out the reaction tRNA(Tyr) + L-tyrosine + ATP = L-tyrosyl-tRNA(Tyr) + AMP + diphosphate + H(+). Functionally, catalyzes the attachment of tyrosine to tRNA(Tyr) in a two-step reaction: tyrosine is first activated by ATP to form Tyr-AMP and then transferred to the acceptor end of tRNA(Tyr). This Methanobrevibacter smithii (strain ATCC 35061 / DSM 861 / OCM 144 / PS) protein is Tyrosine--tRNA ligase.